A 696-amino-acid polypeptide reads, in one-letter code: Elongation factor G (696 aa).

The tr-type G domain maps to 8–288 (EDYRNFGIMA…AVVEYLPSPA (281 aa)). GTP is bound by residues 17 to 24 (AHIDAGKT), 86 to 90 (DTPGH), and 140 to 143 (NKMD).

It belongs to the TRAFAC class translation factor GTPase superfamily. Classic translation factor GTPase family. EF-G/EF-2 subfamily.

Its subcellular location is the cytoplasm. In terms of biological role, catalyzes the GTP-dependent ribosomal translocation step during translation elongation. During this step, the ribosome changes from the pre-translocational (PRE) to the post-translocational (POST) state as the newly formed A-site-bound peptidyl-tRNA and P-site-bound deacylated tRNA move to the P and E sites, respectively. Catalyzes the coordinated movement of the two tRNA molecules, the mRNA and conformational changes in the ribosome. This Mesorhizobium japonicum (strain LMG 29417 / CECT 9101 / MAFF 303099) (Mesorhizobium loti (strain MAFF 303099)) protein is Elongation factor G.